The following is a 1040-amino-acid chain: Contactin-2 (1040 aa).

Positions 1–30 (MGTHARKKASLLLLVLATVALVSSPGWSFA) are cleaved as a signal peptide. 6 Ig-like C2-type domains span residues 39–130 (PIFE…AVLR), 135–224 (QEFS…SVFS), 241–324 (PSIK…GRII), 329–413 (PEWL…AELA), 419–506 (PDFR…GILS), and 511–605 (TKIT…ATVL). 4 disulfides stabilise this stretch: Cys63/Cys113, Cys157/Cys209, Cys263/Cys308, and Cys350/Cys397. 3 N-linked (GlcNAc...) asparagine glycosylation sites follow: Asn78, Asn200, and Asn206. N-linked (GlcNAc...) asparagine glycans are attached at residues Asn463, Asn479, Asn500, and Asn527. Fibronectin type-III domains lie at 612 to 710 (PPGG…TKEA), 715 to 812 (APSG…SAEE), 817 to 913 (APAK…VKPP), and 917 to 1008 (PPGN…NGGT). A glycan (N-linked (GlcNAc...) asparagine) is linked at Asn777. The short motif at 796 to 798 (RGD) is the Cell attachment site element. N-linked (GlcNAc...) asparagine glycans are attached at residues Asn832, Asn920, and Asn942. The interval 895–921 (RAGTGPASPSADAMTVKPPPRRPPGNI) is disordered. Ala1015 is lipidated: GPI-anchor amidated alanine. The propeptide at 1016-1040 (AARPAHPGPAFSCMVILMLAGYQKL) is removed in mature form.

The protein belongs to the immunoglobulin superfamily. Contactin family. In neural tissues in embryos, and in adult brain, spinal cord and cerebellum.

Its subcellular location is the cell membrane. Its function is as follows. May play a role in the initial growth and guidance of axons. May be involved in cell adhesion. In conjunction with another transmembrane protein, CNTNAP2, contributes to the organization of axonal domains at nodes of Ranvier by maintaining voltage-gated potassium channels at the juxtaparanodal region. This is Contactin-2 (Cntn2) from Rattus norvegicus (Rat).